A 469-amino-acid chain; its full sequence is Putative dipeptidase SAUSA300_1697 (469 aa).

His84 provides a ligand contact to Zn(2+). The active site involves Asp86. Residue Asp115 coordinates Zn(2+). The active-site Proton acceptor is the Glu149. Zn(2+) is bound by residues Glu150, Asp173, and His440.

This sequence belongs to the peptidase M20A family. The cofactor is Zn(2+).

This chain is Putative dipeptidase SAUSA300_1697, found in Staphylococcus aureus (strain USA300).